A 284-amino-acid polypeptide reads, in one-letter code: Tetraspanin-10 (284 aa).

The Cytoplasmic portion of the chain corresponds to 1–11 (MGMGTSTFVIR). Residues 12 to 32 (WVNLLTMLLAVAVIIFGVWMS) traverse the membrane as a helical segment. The Extracellular segment spans residues 33-43 (THNDGCRRSLT). Residues 44–64 (FPVIALGGFIFLISIIGFLGA) form a helical membrane-spanning segment. The Cytoplasmic portion of the chain corresponds to 65-75 (CKRSVALLWIY). The helical transmembrane segment at 76 to 96 (LAVLLIVLIAILVFTVLAFIV) threads the bilayer. Residues 97 to 228 (TNNGSGHTNP…AGVAQYMKTE (132 aa)) lie on the Extracellular side of the membrane. N-linked (GlcNAc...) asparagine glycosylation is found at Asn99, Asn128, and Asn183. Residues 229–249 (WRLVAIFNVVLFVVLISSLLS) form a helical membrane-spanning segment. Residues 250–284 (TRFDSEQSFGLLNGLVQISNITFKDCQTTTVPKQF) are Cytoplasmic-facing.

Belongs to the tetraspanin (TM4SF) family.

It localises to the membrane. Functionally, may be involved in the regulation of cell differentiation. This Arabidopsis thaliana (Mouse-ear cress) protein is Tetraspanin-10 (TET10).